Reading from the N-terminus, the 157-residue chain is Small ribosomal subunit protein uS7 (157 aa).

The protein belongs to the universal ribosomal protein uS7 family. Part of the 30S ribosomal subunit. Contacts proteins S9 and S11.

Its function is as follows. One of the primary rRNA binding proteins, it binds directly to 16S rRNA where it nucleates assembly of the head domain of the 30S subunit. Is located at the subunit interface close to the decoding center, probably blocks exit of the E-site tRNA. This is Small ribosomal subunit protein uS7 from Polaromonas naphthalenivorans (strain CJ2).